Consider the following 340-residue polypeptide: Guanine nucleotide-binding protein G(I)/G(S)/G(T) subunit beta-3 (340 aa).

WD repeat units follow at residues 53–83 (GHLA…IVWD), 95–125 (LRSS…SIYS), 141–170 (AHTG…ALWD), 182–212 (GHTG…KLWD), 224–254 (GHES…RLFD), 268–298 (SIIC…NVWD), and 310–340 (GHDN…KIWN).

The protein belongs to the WD repeat G protein beta family. G proteins are composed of 3 units, alpha, beta and gamma. Interacts with RASD2. As to expression, expressed at a high level in the heart and at a much lower level in the brain.

Guanine nucleotide-binding proteins (G proteins) are involved as a modulator or transducer in various transmembrane signaling systems. The beta and gamma chains are required for the GTPase activity, for replacement of GDP by GTP, and for G protein-effector interaction. This Rattus norvegicus (Rat) protein is Guanine nucleotide-binding protein G(I)/G(S)/G(T) subunit beta-3 (Gnb3).